Reading from the N-terminus, the 279-residue chain is Pantothenate synthetase (279 aa).

26–33 (MGGLHEGH) lines the ATP pocket. The active-site Proton donor is His-33. Position 57 (Gln-57) interacts with (R)-pantoate. Gln-57 is a beta-alanine binding site. 143-146 (GKKD) provides a ligand contact to ATP. Residue Gln-149 participates in (R)-pantoate binding. Residues Val-172 and 180 to 183 (LSSR) contribute to the ATP site.

It belongs to the pantothenate synthetase family. As to quaternary structure, homodimer.

The protein resides in the cytoplasm. The enzyme catalyses (R)-pantoate + beta-alanine + ATP = (R)-pantothenate + AMP + diphosphate + H(+). It functions in the pathway cofactor biosynthesis; (R)-pantothenate biosynthesis; (R)-pantothenate from (R)-pantoate and beta-alanine: step 1/1. Its function is as follows. Catalyzes the condensation of pantoate with beta-alanine in an ATP-dependent reaction via a pantoyl-adenylate intermediate. The sequence is that of Pantothenate synthetase from Nitrosospira multiformis (strain ATCC 25196 / NCIMB 11849 / C 71).